The sequence spans 278 residues: Elongation factor Ts (278 aa).

The tract at residues 79-82 (TDFV) is involved in Mg(2+) ion dislocation from EF-Tu.

It belongs to the EF-Ts family.

Its subcellular location is the cytoplasm. Its function is as follows. Associates with the EF-Tu.GDP complex and induces the exchange of GDP to GTP. It remains bound to the aminoacyl-tRNA.EF-Tu.GTP complex up to the GTP hydrolysis stage on the ribosome. The chain is Elongation factor Ts from Borrelia duttonii (strain Ly).